Reading from the N-terminus, the 359-residue chain is Molybdenum import ATP-binding protein ModC (359 aa).

The region spanning 1 to 229 (MLELNFSQQL…SALRPWLQRE (229 aa)) is the ABC transporter domain. 31-38 (GLSGAGKT) contributes to the ATP binding site. The 66-residue stretch at 289–354 (SSSIRNILPV…IKSVSFNRQN (66 aa)) folds into the Mop domain.

The protein belongs to the ABC transporter superfamily. Molybdate importer (TC 3.A.1.8) family. The complex is composed of two ATP-binding proteins (ModC), two transmembrane proteins (ModB) and a solute-binding protein (ModA).

The protein localises to the cell inner membrane. It carries out the reaction molybdate(out) + ATP + H2O = molybdate(in) + ADP + phosphate + H(+). In terms of biological role, part of the ABC transporter complex ModABC involved in molybdenum import. Responsible for energy coupling to the transport system. The polypeptide is Molybdenum import ATP-binding protein ModC (Yersinia pseudotuberculosis serotype I (strain IP32953)).